The following is a 219-amino-acid chain: Large ribosomal subunit protein uL29m (219 aa).

The interval 77-97 (ASKYPLPKPVSPEKLEKREST) is disordered. Residues 87-97 (SPEKLEKREST) are compositionally biased toward basic and acidic residues.

Belongs to the universal ribosomal protein uL29 family. In terms of assembly, component of the mitochondrial large ribosomal subunit. Mature mitochondrial ribosomes consist of a small (37S) and a large (54S) subunit. The 37S subunit contains at least 33 different proteins and 1 molecule of RNA (15S). The 54S subunit contains at least 45 different proteins and 1 molecule of RNA (21S).

The protein localises to the mitochondrion. The protein is Large ribosomal subunit protein uL29m (mrpl4) of Emericella nidulans (strain FGSC A4 / ATCC 38163 / CBS 112.46 / NRRL 194 / M139) (Aspergillus nidulans).